The chain runs to 78 residues: uncharacterized protein (78 aa).

Residues 21–43 (SPFLFGAPLVGGLLGGFLGSALF) form a helical membrane-spanning segment.

It is found in the membrane. This is an uncharacterized protein from Bacillus subtilis (strain 168).